The chain runs to 180 residues: ATP synthase subunit delta, chloroplastic (180 aa).

The protein belongs to the ATPase delta chain family. F-type ATPases have 2 components, F(1) - the catalytic core - and F(0) - the membrane proton channel. F(1) has five subunits: alpha(3), beta(3), gamma(1), delta(1), epsilon(1). CF(0) has four main subunits: a(1), b(1), b'(1) and c(10-14). The alpha and beta chains form an alternating ring which encloses part of the gamma chain. F(1) is attached to F(0) by a central stalk formed by the gamma and epsilon chains, while a peripheral stalk is formed by the delta, b and b' chains.

The protein localises to the plastid. It is found in the chloroplast thylakoid membrane. F(1)F(0) ATP synthase produces ATP from ADP in the presence of a proton or sodium gradient. F-type ATPases consist of two structural domains, F(1) containing the extramembraneous catalytic core and F(0) containing the membrane proton channel, linked together by a central stalk and a peripheral stalk. During catalysis, ATP synthesis in the catalytic domain of F(1) is coupled via a rotary mechanism of the central stalk subunits to proton translocation. In terms of biological role, this protein is part of the stalk that links CF(0) to CF(1). It either transmits conformational changes from CF(0) to CF(1) or is implicated in proton conduction. This chain is ATP synthase subunit delta, chloroplastic, found in Rhodomonas salina (Cryptomonas salina).